The chain runs to 993 residues: ATP-dependent DNA helicase MPH1 (993 aa).

In terms of domain architecture, Helicase ATP-binding spans 94-261; that stretch reads IVHKSLFQNT…EVVNNLDISK (168 aa). 107-114 contacts ATP; that stretch reads IPTGMGKT. A DEAH box motif is present at residues 209 to 212; it reads DEAH. A Helicase C-terminal domain is found at 507–655; that stretch reads KVERLHRQEQ…CIDYKKSDRI (149 aa). Residues 530 to 551 form a disordered region; sequence NDKLERSARRTGSSEEAQISGM. Polar residues predominate over residues 539 to 551; sequence RTGSSEEAQISGM.

The protein belongs to the DEAD box helicase family. DEAH subfamily. FANCM sub-subfamily. In terms of assembly, interacts with the MHF histone-fold complex to form the FANCM-MHF complex.

The protein resides in the nucleus. It catalyses the reaction ATP + H2O = ADP + phosphate + H(+). Its function is as follows. ATP-dependent DNA helicase involved in DNA damage repair by homologous recombination and in genome maintenance. Capable of unwinding D-loops. Plays a role in limiting crossover recombinants during mitotic DNA double-strand break (DSB) repair. Component of a FANCM-MHF complex which promotes gene conversion at blocked replication forks, probably by reversal of the stalled fork. This Saccharomyces cerevisiae (strain YJM789) (Baker's yeast) protein is ATP-dependent DNA helicase MPH1.